The chain runs to 853 residues: Cytochrome P450 monooxygenase mpaDE' (853 aa).

Topologically, residues 1 to 6 (MESLSL) are lumenal. A helical membrane pass occupies residues 7 to 29 (TWITAIAVVLYLVQRYVRSYWRL). Over 30-853 (KDIPGPVLAK…DIENAIEGQK (824 aa)) the chain is Cytoplasmic. Residue cysteine 449 participates in heme binding.

The protein belongs to the cytochrome P450 family. Heme serves as cofactor.

It is found in the endoplasmic reticulum membrane. The enzyme catalyses 5-methylorsellinate + reduced [NADPH--hemoprotein reductase] + O2 = 4,6-dihydroxy-2-(hydroxymethyl)-3-methylbenzoate + oxidized [NADPH--hemoprotein reductase] + H2O + H(+). It catalyses the reaction 4,6-dihydroxy-2-(hydroxymethyl)-3-methylbenzoate + H(+) = 5,7-dihydroxy-4-methylphthalide + H2O. It participates in secondary metabolite biosynthesis; terpenoid biosynthesis. In terms of biological role, cytochrome P450 monooxygenase; part of the gene cluster that mediates the biosynthesis of mycophenolic acid (MPA), the first isolated antibiotic natural product in the world obtained from a culture of Penicillium brevicompactum in 1893. MpaDE' is an endoplasmic reticulum-bound enzyme that catalyzes the conversion of 5-methylorsellinic acid (5MOA) into the phthalide compound 5,7-dihydroxy-4,6-dimethylphthalide (DHMP). MpaDE' first catalyzes hydroxylation of 5-MOA to 4,6-dihydroxy-2-(hydroxymethyl)-3-methylbenzoic acid (DHMB), and then acts as a lactone synthase that catalyzes the ring closure to convert DHMB into DHMP. The first step of the pathway is the synthesis of 5-methylorsellinic acid (5MOA) by the cytosolic polyketide synthase mpaC. 5MOA is then converted to the phthalide compound 5,7-dihydroxy-4,6-dimethylphthalide (DHMP) by the endoplasmic reticulum-bound cytochrome P450 monooxygenase mpaDE. MpaDE first catalyzes hydroxylation of 5-MOA to 4,6-dihydroxy-2-(hydroxymethyl)-3-methylbenzoic acid (DHMB). MpaDE then acts as a lactone synthase that catalyzes the ring closure to convert DHMB into DHMP. The next step is the prenylation of DHMP by the Golgi apparatus-associated prenyltransferase mpaA to yield farnesyl-DHMP (FDHMP). The ER-bound oxygenase mpaB then mediates the oxidative cleavage the C19-C20 double bond in FDHMP to yield FDHMP-3C via a mycophenolic aldehyde intermediate. The O-methyltransferase mpaG catalyzes the methylation of FDHMP-3C to yield MFDHMP-3C. After the cytosolic methylation of FDHMP-3C, MFDHMP-3C enters into peroxisomes probably via free diffusion due to its low molecular weight. Upon a peroxisomal CoA ligation reaction, catalyzed by a beta-oxidation component enzyme acyl-CoA ligase ACL891, MFDHMP-3C-CoA would then be restricted to peroxisomes for the following beta-oxidation pathway steps. The peroxisomal beta-oxidation machinery than converts MFDHMP-3C-CoA into MPA_CoA, via a beta-oxidation chain-shortening process. Finally mpaH acts as a peroxisomal acyl-CoA hydrolase with high substrate specificity toward MPA-CoA to release the final product MPA. The sequence is that of Cytochrome P450 monooxygenase mpaDE' from Penicillium brevicompactum.